We begin with the raw amino-acid sequence, 137 residues long: Large ribosomal subunit protein uL16 (137 aa).

Belongs to the universal ribosomal protein uL16 family. Part of the 50S ribosomal subunit.

Functionally, binds 23S rRNA and is also seen to make contacts with the A and possibly P site tRNAs. This is Large ribosomal subunit protein uL16 from Marinomonas sp. (strain MWYL1).